We begin with the raw amino-acid sequence, 157 residues long: Pyruvoyl-dependent arginine decarboxylase 2 (157 aa).

A Pyruvic acid (Ser) modification is found at serine 43.

The protein belongs to the PdaD family. The cofactor is pyruvate.

It catalyses the reaction L-arginine + H(+) = agmatine + CO2. This Archaeoglobus fulgidus (strain ATCC 49558 / DSM 4304 / JCM 9628 / NBRC 100126 / VC-16) protein is Pyruvoyl-dependent arginine decarboxylase 2 (pdaD2).